We begin with the raw amino-acid sequence, 1090 residues long: Solute carrier family 38 member 10 (1090 aa).

10 helical membrane passes run 9–31, 36–58, 84–104, 123–143, 153–173, 229–249, 272–292, 323–343, 345–365, and 378–398; these read WGLI…PFCF, IVLG…MFLV, LVET…YVVI, TVRV…LSLQ, FSAM…LSSL, IFAS…FFGY, MIRV…ILPC, VLTL…PNVE, ILGF…PALI, and VVLW…LSVT. Residue Ser-441 is modified to Phosphoserine. 6 stretches are compositionally biased toward basic and acidic residues: residues 441–454, 493–508, 517–528, 544–560, 587–596, and 607–623; these read SQEK…KEVL, EAHR…KVVV, PEEKKPPPRLPD, ESEK…EGKR, PRKEDSRPGN, and DSVE…REPA. 3 disordered regions span residues 441–675, 729–831, and 857–1037; these read SQEK…AGSK, EIRQ…IDLR, and KAAP…ELAP. Residues Ser-608 and Ser-636 each carry the phosphoserine modification. Basic and acidic residues-rich tracts occupy residues 654–665, 729–744, and 758–767; these read EAAEQREKKEAE, EIRQ…KPKP, and GQEEEAEHAG. At Thr-769 the chain carries Phosphothreonine. Ser-887 carries the phosphoserine modification. Residues 923–936 show a composition bias toward polar residues; the sequence is RQSGPTKAPVQTQA. Basic and acidic residues-rich tracts occupy residues 954–973, 1004–1013, and 1026–1037; these read PEVR…EQHK, ENAKPNRDLK, and DLASHPEQELAP.

Belongs to the amino acid/polyamine transporter 2 family. Expressed in neurons, astrocytes and epithelial cells scattered throughout the central nervous system structures including striatum, ependyma, cerebral cortex, hippocampus, hypothalamus, thalamus, pons, and cerebellum (at protein level). Highly expressed in paraventricular hypothalamic nucleus, suprachiasmatic nucleus, anterior hypothalamic area central part, in lateral ventricule and in dorsal 3rd ventricule (at protein level). Expressed in choroid plexus epithelial cells (at protein level).

It is found in the membrane. The catalysed reaction is L-glutamate(out) = L-glutamate(in). It carries out the reaction L-glutamine(out) = L-glutamine(in). The enzyme catalyses L-alanine(in) = L-alanine(out). It catalyses the reaction L-serine(in) = L-serine(out). The catalysed reaction is L-leucine(in) = L-leucine(out). Its function is as follows. Facilitates bidirectional transport of amino acids. May act as a glutamate sensor that regulates glutamate-glutamine cycle and mTOR signaling in the brain. The transport mechanism remains to be elucidated. The sequence is that of Solute carrier family 38 member 10 from Mus musculus (Mouse).